The chain runs to 401 residues: ATP phosphoribosyltransferase regulatory subunit (401 aa).

It belongs to the class-II aminoacyl-tRNA synthetase family. HisZ subfamily. As to quaternary structure, heteromultimer composed of HisG and HisZ subunits.

The protein resides in the cytoplasm. Its pathway is amino-acid biosynthesis; L-histidine biosynthesis; L-histidine from 5-phospho-alpha-D-ribose 1-diphosphate: step 1/9. Functionally, required for the first step of histidine biosynthesis. May allow the feedback regulation of ATP phosphoribosyltransferase activity by histidine. The polypeptide is ATP phosphoribosyltransferase regulatory subunit (Cyanothece sp. (strain PCC 7425 / ATCC 29141)).